The primary structure comprises 395 residues: MKFSLALLATVALATISQAAPVEKQVAGKPFQLVKNPHYQANATRAIFRAEKKYARHTAIPEQGKTIVKSAASGTGSVPMTDVDYDVEYYATVSVGTPAQSIKLDFDTGSSDLWFSSTLCTSCGSKSFDPTKSSTYKKVGKSWQISYGDGSSASGITATDNVELGGLKITGQTIELATRESSSFSSGAIDGILGLGFDTISTVAGTKTPVDNLISQNLISKPIFGVWLGKQSEGGGGEYVFGGYNTDHIDGSLTTVKVDNSQGWYGVTVSGLKVGSKSVASSFDGILDTGTTLLIFDQATGSKVAAAYGAKDNGDGTYTISCDQSKLQPLALTMGGKDFFVPADSLIYVKQGSQCIAGFGYSSMDFAIIGDTFLKNNYVVFNQGVPEVQIAPSKA.

A signal peptide spans 1-19; it reads MKFSLALLATVALATISQA. A propeptide spans 20–71 (activation peptide); that stretch reads APVEKQVAGKPFQLVKNPHYQANATRAIFRAEKKYARHTAIPEQGKTIVKSA. One can recognise a Peptidase A1 domain in the interval 89–391; it reads YYATVSVGTP…NQGVPEVQIA (303 aa). The active site involves D107. The cysteines at positions 120 and 123 are disulfide-linked. Residue D288 is part of the active site. C322 and C355 are joined by a disulfide.

Belongs to the peptidase A1 family. As to quaternary structure, monomer.

Hydrolysis of proteins with a broad specificity. Residues recognized to be cleaved were primarily those of trypsin and chymotrypsin and Lys was the most susceptible. This is Syncephapepsin (SPSR) from Syncephalastrum racemosum (Filamentous fungus).